Reading from the N-terminus, the 436-residue chain is 3-ketoacyl-CoA thiolase (436 aa).

Residue C99 is the Acyl-thioester intermediate of the active site. Active-site proton acceptor residues include H392 and C422.

The protein belongs to the thiolase-like superfamily. Thiolase family. Heterotetramer of two alpha chains (FadJ) and two beta chains (FadI).

The protein localises to the cytoplasm. It catalyses the reaction an acyl-CoA + acetyl-CoA = a 3-oxoacyl-CoA + CoA. Its pathway is lipid metabolism; fatty acid beta-oxidation. Catalyzes the final step of fatty acid oxidation in which acetyl-CoA is released and the CoA ester of a fatty acid two carbons shorter is formed. The chain is 3-ketoacyl-CoA thiolase from Escherichia coli O157:H7.